A 2971-amino-acid polypeptide reads, in one-letter code: uncharacterized protein (2971 aa).

A disordered region spans residues 929 to 964 (SANFSNGPEESSLSTRLHIQKKRKAKKQRLETRRQK). Positions 936-945 (PEESSLSTRL) are enriched in polar residues. Residues 946–955 (HIQKKRKAKK) are compositionally biased toward basic residues.

Its subcellular location is the plastid. It localises to the chloroplast. This is an uncharacterized protein from Chlamydomonas reinhardtii (Chlamydomonas smithii).